Reading from the N-terminus, the 492-residue chain is Glutamyl-tRNA(Gln) amidotransferase subunit A (492 aa).

Active-site charge relay system residues include lysine 84 and serine 159. Residue serine 183 is the Acyl-ester intermediate of the active site.

It belongs to the amidase family. GatA subfamily. As to quaternary structure, heterotrimer of A, B and C subunits.

The catalysed reaction is L-glutamyl-tRNA(Gln) + L-glutamine + ATP + H2O = L-glutaminyl-tRNA(Gln) + L-glutamate + ADP + phosphate + H(+). Functionally, allows the formation of correctly charged Gln-tRNA(Gln) through the transamidation of misacylated Glu-tRNA(Gln) in organisms which lack glutaminyl-tRNA synthetase. The reaction takes place in the presence of glutamine and ATP through an activated gamma-phospho-Glu-tRNA(Gln). The protein is Glutamyl-tRNA(Gln) amidotransferase subunit A of Anaeromyxobacter sp. (strain K).